The sequence spans 859 residues: Transforming growth factor-beta receptor-associated protein 1 (859 aa).

Residues 24–297 (RGLLECVECC…HILQDFEGRV (274 aa)) enclose the CNH domain. The stretch at 563–727 (KRPLDEQQSG…LLAVYLGPGP (165 aa)) is one CHCR repeat.

The protein belongs to the TRAP1 family. Interacts with TGFBR2 and ACVR2B; in the absence of ligand stimulation. Interacts with TGFBR1, ACVRL1, BMPR1A and ACVR1B; in the absence of ligand stimulation and to a less extent. Interacts with SMAD4; the interaction seems to be mutually exclusive with the interaction of SMAD4 and phosphorylated SMAD2. May interact with ALOX5. Interacts with RAB5C. Interacts with VPS8, VPS11 and VPS16. Component of the putative class C core vacuole/endosome tethering (CORVET) complex; the core of which composed of the class C Vps proteins VPS11, VPS16, VPS18 and VPS33A, is associated with VPS8 and TGFBRAP1.

The protein localises to the cytoplasm. It localises to the early endosome. Functionally, plays a role in the TGF-beta/activin signaling pathway. It associates with inactive heteromeric TGF-beta and activin receptor complexes, mainly through the type II receptor, and is released upon activation of signaling. May recruit SMAD4 to the vicinity of the receptor complex and facilitate its interaction with receptor-regulated Smads, such as SMAD2. Its function is as follows. Plays a role in vesicle-mediated protein trafficking of the endocytic membrane transport pathway. Believed to act as a component of the putative CORVET endosomal tethering complexes which is proposed to be involved in the Rab5-to-Rab7 endosome conversion probably implicating MON1A/B, and via binding SNAREs and SNARE complexes to mediate tethering and docking events during SNARE-mediated membrane fusion. The CORVET complex is proposed to function as a Rab5 effector to mediate early endosome fusion probably in specific endosome subpopulations. Functions predominantly in APPL1-containing endosomes and in degradative but not recycling trafficking of endocytosed cargo. The protein is Transforming growth factor-beta receptor-associated protein 1 (TGFBRAP1) of Bos taurus (Bovine).